A 597-amino-acid polypeptide reads, in one-letter code: tRNA uridine 5-carboxymethylaminomethyl modification enzyme MnmG (597 aa).

10–15 (GGGHAG) contributes to the FAD binding site. 267–281 (GPRYCPSIEDKVVRF) provides a ligand contact to NAD(+).

The protein belongs to the MnmG family. In terms of assembly, homodimer. Heterotetramer of two MnmE and two MnmG subunits. FAD serves as cofactor.

It localises to the cytoplasm. Its function is as follows. NAD-binding protein involved in the addition of a carboxymethylaminomethyl (cmnm) group at the wobble position (U34) of certain tRNAs, forming tRNA-cmnm(5)s(2)U34. This is tRNA uridine 5-carboxymethylaminomethyl modification enzyme MnmG from Thermus thermophilus (strain ATCC BAA-163 / DSM 7039 / HB27).